Reading from the N-terminus, the 468-residue chain is MVMSRGRIPRLGAAVLVALTTAAAACGADSQGLVVSFYTPATDGATFTAIAQRCNQQFGGRFTIAQVSLPRSPNEQRLQLARRLTGNDRTLDVMALDVVWTAEFAEAGWALPLSDDPAGLAENDAVADTLPGPLATAGWNHKLYAAPVTTNTQLLWYRPDLVNSPPTDWNAMIAEAARLHAAGEPSWIAVQANQGEGLVVWFNTLLVSAGGSVLSEDGRHVTLTDTPAHRAATVSALQILKSVATTPGADPSITRTEEGSARLAFEQGKAALEVNWPFVFASMLENAVKGGVPFLPLNRIPQLAGSINDIGTFTPSDEQFRIAYDASQQVFGFAPYPAVAPGQPAKVTIGGLNLAVAKTTRHRAEAFEAVRCLRDQHNQRYVSLEGGLPAVRASLYSDPQFQAKYPMHAIIRQQLTDAAVRPATPVYQALSIRLAAVLSPITEIDPESTADELAAQAQKAIDGMGLLP.

Residues 1–25 (MVMSRGRIPRLGAAVLVALTTAAAA) form the signal peptide. Cys-26 carries the N-palmitoyl cysteine lipid modification. Residue Cys-26 is the site of S-diacylglycerol cysteine attachment. A disulfide bridge connects residues Cys-54 and Cys-372. 6 residues coordinate alpha,alpha-trehalose: Asp-97, Asn-151, Trp-276, Phe-278, Gly-351, and Arg-421.

It belongs to the bacterial solute-binding protein 1 family. As to quaternary structure, monomer. The complex is composed of two ATP-binding proteins (SugC), two transmembrane proteins (SugA and SugB) and a solute-binding protein (LpqY).

The protein localises to the cell inner membrane. Part of the ABC transporter complex LpqY-SugA-SugB-SugC, which is highly specific for uptake of trehalose. Involved in the recycling of extracellular trehalose released from trehalose-containing molecules synthesized by M.tuberculosis. Trehalose uptake is essential for virulence. The sequence is that of Trehalose-binding lipoprotein LpqY (lpqY) from Mycobacterium tuberculosis (strain CDC 1551 / Oshkosh).